We begin with the raw amino-acid sequence, 641 residues long: Hemagglutinin-esterase-fusion glycoprotein (641 aa).

Residues 1–26 (EKIKICLQKQVNSSFSLHNGFGGNLY) are fusion domain-1. Over 1-616 (EKIKICLQKQ…QSDPFYWGSS (616 aa)) the chain is Extracellular. Disulfide bonds link Cys-6-Cys-569, Cys-106-Cys-151, Cys-126-Cys-174, Cys-196-Cys-238, Cys-215-Cys-302, Cys-223-Cys-275, and Cys-332-Cys-338. 2 N-linked (GlcNAc...) asparagine; by host glycosylation sites follow: Asn-12 and Asn-47. An esterase domain-1 region spans residues 27 to 137 (ATEEKRMFEL…RKNWTDIKLN (111 aa)). The Nucleophile role is filled by Ser-57. N-linked (GlcNAc...) asparagine; by host glycosylation is present at Asn-130. Residues 137–296 (NFQKNIYELA…VRSSPRFLLM (160 aa)) are N-acetyl-9-O-acetylneuraminic acid binding. Positions 297–351 (PERSYCFDMKEKGPVTAVQSIWGKDRKSDYAVDQACLSTPGCMLIQKQKPYTGEA) are esterase domain-2. Residues Asp-352 and His-355 each act as charge relay system in the active site. Residues 352 to 637 (DDHHGDQEMR…AALVISGIAI (286 aa)) are fusion domain-2. An N-linked (GlcNAc...) asparagine; by host glycan is attached at Asn-381. Residues 617 to 637 (LGLAITAAISLAALVISGIAI) form a helical membrane-spanning segment. Topologically, residues 638 to 641 (CRTK) are cytoplasmic.

Belongs to the influenza type C/coronaviruses hemagglutinin-esterase family. As to quaternary structure, homotrimer of disulfide-linked HEF1-HEF2. Post-translationally, in natural infection, inactive HEF is matured into HEF1 and HEF2 outside the cell by one or more trypsin-like, arginine-specific endoprotease.

It localises to the virion membrane. The protein localises to the host cell membrane. The enzyme catalyses N-acetyl-9-O-acetylneuraminate + H2O = N-acetylneuraminate + acetate + H(+). It catalyses the reaction N-acetyl-4-O-acetylneuraminate + H2O = N-acetylneuraminate + acetate + H(+). Its function is as follows. Binds to the N-acetyl-9-O-acetylneuraminic acid residues on the cell surface, bringing about the attachment of the virus particle to the cell. Plays a major role in the determination of host range restriction and virulence. Class I viral fusion protein. Responsible for penetration of the virus into the cell cytoplasm by mediating the fusion of the membrane of the endocytosed virus particle with the endosomal membrane. Low pH in endosomes induce an irreversible conformational change in HEF2, releasing the fusion hydrophobic peptide. Several trimers are required to form a competent fusion pore. Displays a receptor-destroying activity which is a neuraminidate-O-acetyl esterase. This activity cleaves off any receptor on the cell surface, which would otherwise prevent virions release. These cleavages prevent self-aggregation and ensure the efficient spread of the progeny virus from cell to cell. This Influenza C virus (strain C/Kyoto/41/1982) protein is Hemagglutinin-esterase-fusion glycoprotein (HE).